The sequence spans 317 residues: Protease HtpX homolog (317 aa).

The next 2 membrane-spanning stretches (helical) occupy residues 6–26 (TAIL…AIGG) and 28–48 (GGMM…YWNS). Histidine 130 serves as a coordination point for Zn(2+). Glutamate 131 is an active-site residue. Histidine 134 is a binding site for Zn(2+). Transmembrane regions (helical) follow at residues 145–165 (MTAT…LFGG) and 173–193 (PFGA…AMLV). Glutamate 202 serves as a coordination point for Zn(2+). Positions 283–317 (GGGGFAPGPAPAVRPPGGNPWGVDPGGGQRRGPWG) are disordered. The segment covering 290–300 (GPAPAVRPPGG) has biased composition (pro residues). Positions 306 to 317 (DPGGGQRRGPWG) are enriched in gly residues.

Belongs to the peptidase M48B family. Zn(2+) is required as a cofactor.

The protein resides in the cell inner membrane. This chain is Protease HtpX homolog, found in Xanthobacter autotrophicus (strain ATCC BAA-1158 / Py2).